The chain runs to 177 residues: Thymidine kinase (177 aa).

Position 11–18 (11–18) interacts with ATP; that stretch reads GPMFSGKS. The active-site Proton acceptor is E83. Substrate is bound at residue F113. Zn(2+) is bound by residues C138 and C141. Position 157–161 (157–161) interacts with substrate; it reads IEIIG. Residues C170 and C173 each coordinate Zn(2+).

It belongs to the thymidine kinase family. In terms of assembly, homotetramer. Two molecules of substrate bind to each enzyme tetramer.

It carries out the reaction thymidine + ATP = dTMP + ADP + H(+). Phosphorylates thymidine and thymidine analogs, such as azidothymidine (AZT). Part of the salvage pathway for pyrimidine deoxyribonucleotide synthesis. The polypeptide is Thymidine kinase (OPG101) (Variola virus (isolate Human/India/Ind3/1967) (VARV)).